We begin with the raw amino-acid sequence, 137 residues long: Nucleoside diphosphate kinase (137 aa).

K9, F57, R85, T91, R102, and N112 together coordinate ATP. Residue H115 is the Pros-phosphohistidine intermediate of the active site.

Belongs to the NDK family. In terms of assembly, homotetramer. Mg(2+) is required as a cofactor.

The protein resides in the cytoplasm. The catalysed reaction is a 2'-deoxyribonucleoside 5'-diphosphate + ATP = a 2'-deoxyribonucleoside 5'-triphosphate + ADP. It carries out the reaction a ribonucleoside 5'-diphosphate + ATP = a ribonucleoside 5'-triphosphate + ADP. Its function is as follows. Major role in the synthesis of nucleoside triphosphates other than ATP. The ATP gamma phosphate is transferred to the NDP beta phosphate via a ping-pong mechanism, using a phosphorylated active-site intermediate. The sequence is that of Nucleoside diphosphate kinase from Thermus thermophilus (strain ATCC BAA-163 / DSM 7039 / HB27).